A 355-amino-acid polypeptide reads, in one-letter code: Peptide chain release factor 1 (355 aa).

Q232 is modified (N5-methylglutamine).

Belongs to the prokaryotic/mitochondrial release factor family. In terms of processing, methylated by PrmC. Methylation increases the termination efficiency of RF1.

The protein resides in the cytoplasm. Its function is as follows. Peptide chain release factor 1 directs the termination of translation in response to the peptide chain termination codons UAG and UAA. This Thermobifida fusca (strain YX) protein is Peptide chain release factor 1.